The chain runs to 754 residues: 5-methyltetrahydropteroyltriglutamate--homocysteine methyltransferase (754 aa).

Residues 17–20 (RELK) and lysine 117 contribute to the 5-methyltetrahydropteroyltri-L-glutamate site. L-homocysteine-binding positions include 431 to 433 (IGS) and glutamate 484. L-methionine is bound by residues 431–433 (IGS) and glutamate 484. 5-methyltetrahydropteroyltri-L-glutamate is bound by residues 515–516 (RC) and tryptophan 561. Position 599 (aspartate 599) interacts with L-homocysteine. Residue aspartate 599 coordinates L-methionine. Residue glutamate 605 coordinates 5-methyltetrahydropteroyltri-L-glutamate. The Zn(2+) site is built by histidine 641, cysteine 643, and glutamate 665. Histidine 694 serves as the catalytic Proton donor. Cysteine 726 lines the Zn(2+) pocket.

This sequence belongs to the vitamin-B12 independent methionine synthase family. It depends on Zn(2+) as a cofactor.

It catalyses the reaction 5-methyltetrahydropteroyltri-L-glutamate + L-homocysteine = tetrahydropteroyltri-L-glutamate + L-methionine. It functions in the pathway amino-acid biosynthesis; L-methionine biosynthesis via de novo pathway; L-methionine from L-homocysteine (MetE route): step 1/1. Catalyzes the transfer of a methyl group from 5-methyltetrahydrofolate to homocysteine resulting in methionine formation. In Pectobacterium atrosepticum (strain SCRI 1043 / ATCC BAA-672) (Erwinia carotovora subsp. atroseptica), this protein is 5-methyltetrahydropteroyltriglutamate--homocysteine methyltransferase.